The chain runs to 126 residues: Small ribosomal subunit protein uS13 (126 aa).

Positions 92 to 126 are disordered; that stretch reads HRRGLPANGQRTHTNARTRKGPRKGMLQRRPAATK. Positions 105 to 118 are enriched in basic residues; sequence TNARTRKGPRKGML.

It belongs to the universal ribosomal protein uS13 family. Part of the 30S ribosomal subunit. Forms a loose heterodimer with protein S19. Forms two bridges to the 50S subunit in the 70S ribosome.

In terms of biological role, located at the top of the head of the 30S subunit, it contacts several helices of the 16S rRNA. In the 70S ribosome it contacts the 23S rRNA (bridge B1a) and protein L5 of the 50S subunit (bridge B1b), connecting the 2 subunits; these bridges are implicated in subunit movement. Contacts the tRNAs in the A and P-sites. The protein is Small ribosomal subunit protein uS13 of Sorangium cellulosum (strain So ce56) (Polyangium cellulosum (strain So ce56)).